A 1008-amino-acid chain; its full sequence is Probable transport protein MmpL10 (1008 aa).

Helical transmembrane passes span 23–43 (WPWVVIGCWTLLALMLPMTVP), 202–222 (IELVIAVLLLTILMIIYRNPI), 225–245 (LLPLITIGASLMTAQAVVSGV), 257–277 (MIVLLSAMIAGAGTDYAVFLI), 301–321 (ALISLGKVIAASAATVGITFL), 340–360 (IGIAVAFLAAVTLMPALLVLA), 389–409 (VAYLSASMVILIVLALCASLV), 835–855 (DLQLIVIVTMIVVLLILMALL), 862–882 (IYLVGSVIVSYLSALGLCVLV), 895–915 (VPGLAFVVLVAVGADYNMLLA), 940–960 (VITAAGLIFAASMFGLLLSSI), and 961–981 (ATVVQAGFVLGSGILLDTFIV).

Belongs to the resistance-nodulation-cell division (RND) (TC 2.A.6) family. MmpL subfamily.

The protein localises to the cell membrane. The sequence is that of Probable transport protein MmpL10 (mmpL10) from Mycobacterium leprae (strain TN).